Consider the following 409-residue polypeptide: Pleckstrin homology domain-containing family O member 1 (409 aa).

The tract at residues 1-24 is disordered; that stretch reads MMKKNNSAKRGPQDGNQQPAPPEK. One can recognise a PH domain in the interval 21-132; that stretch reads PPEKVGWVRK…WINALNSAIT (112 aa). Positions 133 to 193 are interaction with capping proteins (CPs); the sequence is RAKNRILDEV…MLTLDLIQEE (61 aa). The interval 136-308 is interaction with ATM, CKIP, IFP35 and NMI; that stretch reads NRILDEVTVE…LPNPGQLSRI (173 aa). Residues 218-267 are disordered; sequence LAGSRRRADSDRIQPSADRASSLSRPWEKTDKGATYTPQAPKKLTPTEKG. Phosphoserine occurs at positions 227 and 271. The interval 308 to 409 is negative regulator of AP-1 activity; that stretch reads IQDLVARKLE…PHSQYRKSLM (102 aa). Disordered regions lie at residues 325-350 and 390-409; these read EVQG…ESEQ and TPDS…KSLM. Positions 331–340 are enriched in basic and acidic residues; it reads DGKRKAKDPP. Phosphoserine is present on serine 342. Over residues 390-402 the composition is skewed to polar residues; the sequence is TPDSHLRQTTPHS.

In terms of assembly, heterodimer or homodimer. Interacts with CK2 and actin capping subunits (capping protein CP-alpha and CP-beta). CKIP1 and CK2 together inhibit the activity of actin capping protein at the barbed ends of actin filaments. Interacts with ATM, IFP35, JUN, JUND, NMI and PI3K. Interacts with AKT1, AKT2 and AKT3 (each isozyme of PKB), PtdIns(3,5)P2, PtdIns(4,5)P2 and PtdIns(3,4,5)P2. In terms of processing, C-terminal fragments could be released during apoptosis via caspase-3-dependent cleavage. In terms of tissue distribution, abundantly expressed in skeletal muscle and heart, moderately in kidney, liver, brain and placenta and sparingly in the pancreas and lung. Easily detectable in cell lines such as MOLT-4, HEK293 and Jurkat.

Its subcellular location is the cell membrane. It is found in the nucleus. It localises to the cytoplasm. Functionally, plays a role in the regulation of the actin cytoskeleton through its interactions with actin capping protein (CP). May function to target CK2 to the plasma membrane thereby serving as an adapter to facilitate the phosphorylation of CP by protein kinase 2 (CK2). Appears to target ATM to the plasma membrane. Appears to also inhibit tumor cell growth by inhibiting AKT-mediated cell-survival. Also implicated in PI3K-regulated muscle differentiation, the regulation of AP-1 activity (plasma membrane bound AP-1 regulator that translocates to the nucleus) and the promotion of apoptosis induced by tumor necrosis factor TNF. When bound to PKB, it inhibits it probably by decreasing PKB level of phosphorylation. The sequence is that of Pleckstrin homology domain-containing family O member 1 (PLEKHO1) from Homo sapiens (Human).